The following is a 114-amino-acid chain: UPF0342 protein LCA_0622 (114 aa).

Belongs to the UPF0342 family.

The polypeptide is UPF0342 protein LCA_0622 (Latilactobacillus sakei subsp. sakei (strain 23K) (Lactobacillus sakei subsp. sakei)).